The following is a 339-amino-acid chain: Ketol-acid reductoisomerase (NADP(+)) (339 aa).

The 182-residue stretch at 1–182 (MRVYYDRDAD…GGGRSGVIET (182 aa)) folds into the KARI N-terminal Rossmann domain. NADP(+) contacts are provided by residues 24–27 (YGSQ), Arg-48, Ser-51, Thr-53, and 83–86 (DELQ). Residue His-108 is part of the active site. Gly-134 serves as a coordination point for NADP(+). The 146-residue stretch at 183-328 (TFKEECETDL…GKLRAMMPWI (146 aa)) folds into the KARI C-terminal knotted domain. Positions 191, 195, 227, and 231 each coordinate Mg(2+). Ser-252 lines the substrate pocket.

The protein belongs to the ketol-acid reductoisomerase family. Mg(2+) serves as cofactor.

The catalysed reaction is (2R)-2,3-dihydroxy-3-methylbutanoate + NADP(+) = (2S)-2-acetolactate + NADPH + H(+). The enzyme catalyses (2R,3R)-2,3-dihydroxy-3-methylpentanoate + NADP(+) = (S)-2-ethyl-2-hydroxy-3-oxobutanoate + NADPH + H(+). It participates in amino-acid biosynthesis; L-isoleucine biosynthesis; L-isoleucine from 2-oxobutanoate: step 2/4. Its pathway is amino-acid biosynthesis; L-valine biosynthesis; L-valine from pyruvate: step 2/4. Functionally, involved in the biosynthesis of branched-chain amino acids (BCAA). Catalyzes an alkyl-migration followed by a ketol-acid reduction of (S)-2-acetolactate (S2AL) to yield (R)-2,3-dihydroxy-isovalerate. In the isomerase reaction, S2AL is rearranged via a Mg-dependent methyl migration to produce 3-hydroxy-3-methyl-2-ketobutyrate (HMKB). In the reductase reaction, this 2-ketoacid undergoes a metal-dependent reduction by NADPH to yield (R)-2,3-dihydroxy-isovalerate. This is Ketol-acid reductoisomerase (NADP(+)) from Brucella abortus (strain S19).